The sequence spans 274 residues: MSGMPKSSKMLQYINYRMRVTIQDGRVIVGRFLAFDKHMNVVICDAEEFRRIRQKGKEDREEKRTLGMILIRGETVVSMSVEAPPPEEAKLAATSKMPPQIPGGPGIGRAVGRGMPMGGMGMGGSGPMSGLTGPVRGVGGPAPHSMMPGGGVPPPMGRGGFPPQGFPPGGPSPQGAFNNNPNNNNGGPPQGFPPGGPIGRGGFPPQGFPPGGPMGGPNLNNGNMPPQGFPPGGPMGRGGFPPQGFPPGGPNFNNMPPQGFPPGGPMGRGGFQRK.

The Sm domain occupies 5 to 85 (PKSSKMLQYI…VVSMSVEAPP (81 aa)). The disordered stretch occupies residues 148 to 274 (PGGGVPPPMG…PMGRGGFQRK (127 aa)). Copy 1 of the repeat occupies 162–171 (PPQGFPPGGP). The 6 X 10 AA repeats of P-P-Q-G-F-P-P-G-G-P stretch occupies residues 162–265 (PPQGFPPGGP…PPQGFPPGGP (104 aa)). Positions 173 to 187 (PQGAFNNNPNNNNGG) are enriched in low complexity. 5 repeat units span residues 188–197 (PPQGFPPGGP), 204–213 (PPQGFPPGGP), 225–234 (PPQGFPPGGP), 241–250 (PPQGFPPGGP), and 256–265 (PPQGFPPGGP). Residues 216–226 (GPNLNNGNMPP) show a composition bias toward low complexity. Residues 265–274 (PMGRGGFQRK) show a composition bias toward gly residues.

It belongs to the snRNP SmB/SmN family.

The protein resides in the cytoplasm. Its subcellular location is the cytosol. The protein localises to the nucleus. Plays a role in pre-mRNA splicing as a core component of the spliceosomal U1, U2, U4 and U5 small nuclear ribonucleoproteins (snRNPs), the building blocks of the spliceosome. In Dictyostelium discoideum (Social amoeba), this protein is Small nuclear ribonucleoprotein-associated protein B (snrpb).